A 619-amino-acid polypeptide reads, in one-letter code: Sodium-dependent dopamine transporter (619 aa).

Over 1–56 (MSKSKCSVGPMSSVVAPAKEPNAVGPREVELILVKEQNGVQLTNSTLINPPQTPVE) the chain is Cytoplasmic. A discontinuously helical transmembrane segment spans residues 57–95 (VQERETWSKKIDFLLSVIGFAVDLANVWRFPYLCYKNGG). The Na(+) site is built by Gly75, Ala77, Val78, Asp79, and Asn82. A dopamine-binding site is contributed by Asp79. 2 helical membrane passes run 96–127 (GAFL…NREG) and 128–171 (AAGV…FSSF). 2 residues coordinate dopamine: Ser149 and Gly153. The Extracellular segment spans residues 172–235 (TMDLPWIHCN…SRGIDDLGPP (64 aa)). Cys180 and Cys189 are joined by a disulfide. 4 N-linked (GlcNAc...) asparagine glycosylation sites follow: Asn181, Asn188, Asn196, and Asn204. 2 helical membrane-spanning segments follow: residues 236-255 (RWQL…FSLW) and 256-286 (KGVK…GVTL). The Extracellular segment spans residues 287 to 305 (PGAMDGIRAYLSVDFYRLC). A discontinuously helical membrane pass occupies residues 306-334 (EASVWIDAATQVCFSLGVGFGVLIAFSSY). Gln316 serves as a coordination point for chloride. Residue Phe319 coordinates dopamine. Ser320 and Asn352 together coordinate Na(+). Ser320 lines the chloride pocket. A helical membrane pass occupies residues 335-375 (NKFTNNCYRDAIITTSINSLTSFSSGFVVFSFLGYMAQKHN). Ser356 is a chloride binding site. Residues 376–399 (VPIRDVATDGPGLIFIIYPEAIAT) lie on the Extracellular side of the membrane. A run of 3 helical transmembrane segments spans residues 400 to 441 (LPLS…QLLH), 442 to 465 (RHRE…CVTN), and 466 to 498 (GGIY…AWFY). Na(+)-binding residues include Leu417, Asp420, and Ser421. The dopamine site is built by Ser421 and Ala422. The Cytoplasmic segment spans residues 499 to 515 (GVQQFSDDIKQMTGQRP). A helical membrane pass occupies residues 516 to 541 (NLYWRLCWKLVSPCFLLYVVVVSIVT). The Extracellular portion of the chain corresponds to 542-552 (FRPPHYGAYIF). A helical membrane pass occupies residues 553 to 582 (PDWANALGWIIATSSMAMVPIYATYKFCSL). The tract at residues 560–589 (GWIIATSSMAMVPIYATYKFCSLPGSFREK) is interaction with TGFB1I1. Over 583–619 (PGSFREKLAYAITPEKDRQLVDRGEVRQFTLRHWLLV) the chain is Cytoplasmic.

It belongs to the sodium:neurotransmitter symporter (SNF) (TC 2.A.22) family. SLC6A3 subfamily. In terms of assembly, monomer. Homooligomer; disulfide-linked. Interacts with PRKCABP and TGFB1I1. Interacts (via N-terminus) with SYNGR3 (via N-terminus). Interacts with SLC18A2. Interacts with TOR1A (ATP-bound); TOR1A regulates SLC6A3 subcellular location. Interacts with alpha-synuclein/SNCA. Interacts with SEPTIN4. In terms of tissue distribution, found in the substantia nigra and ventral tegmental dopamine neurons, in fibers of the medial forebrain bundle ascending into the striatum, and within dense fiber networks and varicosities in the dorsal and ventral striatum (at protein level). Lower expression in the cortex (at protein level). Absent from the corpus callosum. Expressed throughout the retina at postnatal day 8.

The protein resides in the cell membrane. Its subcellular location is the cell projection. The protein localises to the neuron projection. It localises to the axon. The catalysed reaction is dopamine(out) + chloride(out) + Na(+)(out) = dopamine(in) + chloride(in) + Na(+)(in). The enzyme catalyses (R)-noradrenaline(out) + chloride(out) + Na(+)(out) = (R)-noradrenaline(in) + chloride(in) + Na(+)(in). It catalyses the reaction dopamine(out) + chloride(out) + 2 Na(+)(out) = dopamine(in) + chloride(in) + 2 Na(+)(in). With respect to regulation, inhibited by amphetamine, bupropion, cocaine and ritalin. Inhibited by zinc ions. In terms of biological role, mediates sodium- and chloride-dependent transport of dopamine. Also mediates sodium- and chloride-dependent transport of norepinephrine (also known as noradrenaline). Regulator of light-dependent retinal hyaloid vessel regression, downstream of OPN5 signaling. The protein is Sodium-dependent dopamine transporter (Slc6a3) of Mus musculus (Mouse).